The chain runs to 197 residues: uncharacterized protein (197 aa).

The signal sequence occupies residues 1-23 (MSARAPKELRLALPPCLLNRTFA). 2 N-linked (GlcNAc...) asparagine glycosylation sites follow: asparagine 19 and asparagine 26. Over 24–61 (SPNASGSGNTGARGPGAGGSGTCITQVGQQLFQSFSST) the chain is Extracellular. The chain crosses the membrane as a helical span at residues 62–82 (LVLIVLVTLIFCLIVLSLSTF). Over 83–197 (HIHKRRMKKR…EGLLQTVVLS (115 aa)) the chain is Cytoplasmic. The disordered stretch occupies residues 94 to 180 (MQRAQEEYER…SSPQGAHAAS (87 aa)). 2 stretches are compositionally biased toward basic and acidic residues: residues 96–107 (RAQEEYERDHCS) and 125–136 (HTKETRLERQPR). The segment covering 147–161 (SSSSSSSPGLLCQGP) has biased composition (low complexity). The segment covering 162–171 (CAPPPPPPAS) has biased composition (pro residues).

Its subcellular location is the membrane. This is an uncharacterized protein from Macaca fascicularis (Crab-eating macaque).